A 436-amino-acid polypeptide reads, in one-letter code: Serine--tRNA ligase (436 aa).

242 to 244 (TAE) is an L-serine binding site. Residue 273–275 (RSE) coordinates ATP. E296 is an L-serine binding site. 360–363 (EISS) is a binding site for ATP. S395 is a binding site for L-serine.

It belongs to the class-II aminoacyl-tRNA synthetase family. Type-1 seryl-tRNA synthetase subfamily. As to quaternary structure, homodimer. The tRNA molecule binds across the dimer.

The protein localises to the cytoplasm. It carries out the reaction tRNA(Ser) + L-serine + ATP = L-seryl-tRNA(Ser) + AMP + diphosphate + H(+). It catalyses the reaction tRNA(Sec) + L-serine + ATP = L-seryl-tRNA(Sec) + AMP + diphosphate + H(+). Its pathway is aminoacyl-tRNA biosynthesis; selenocysteinyl-tRNA(Sec) biosynthesis; L-seryl-tRNA(Sec) from L-serine and tRNA(Sec): step 1/1. Catalyzes the attachment of serine to tRNA(Ser). Is also able to aminoacylate tRNA(Sec) with serine, to form the misacylated tRNA L-seryl-tRNA(Sec), which will be further converted into selenocysteinyl-tRNA(Sec). The sequence is that of Serine--tRNA ligase from Polynucleobacter asymbioticus (strain DSM 18221 / CIP 109841 / QLW-P1DMWA-1) (Polynucleobacter necessarius subsp. asymbioticus).